A 145-amino-acid chain; its full sequence is Hemoglobin subunit beta-A (145 aa).

The 145-residue stretch at 1-145 (MLTAEEKAAV…VANALAHRYH (145 aa)) folds into the Globin domain. The heme b site is built by H62 and H91.

Belongs to the globin family. As to quaternary structure, heterotetramer of two alpha chains and two beta chains. Red blood cells.

In terms of biological role, involved in oxygen transport from the lung to the various peripheral tissues. This chain is Hemoglobin subunit beta-A, found in Bos javanicus (Wild banteng).